We begin with the raw amino-acid sequence, 612 residues long: Dihydroxy-acid dehydratase (612 aa).

A Mg(2+)-binding site is contributed by aspartate 81. Cysteine 122 is a [2Fe-2S] cluster binding site. Residues aspartate 123 and lysine 124 each coordinate Mg(2+). Position 124 is an N6-carboxylysine (lysine 124). Cysteine 193 contacts [2Fe-2S] cluster. Residue glutamate 489 coordinates Mg(2+). The active-site Proton acceptor is serine 515.

Belongs to the IlvD/Edd family. In terms of assembly, homodimer. [2Fe-2S] cluster serves as cofactor. Mg(2+) is required as a cofactor.

It catalyses the reaction (2R)-2,3-dihydroxy-3-methylbutanoate = 3-methyl-2-oxobutanoate + H2O. The enzyme catalyses (2R,3R)-2,3-dihydroxy-3-methylpentanoate = (S)-3-methyl-2-oxopentanoate + H2O. Its pathway is amino-acid biosynthesis; L-isoleucine biosynthesis; L-isoleucine from 2-oxobutanoate: step 3/4. It functions in the pathway amino-acid biosynthesis; L-valine biosynthesis; L-valine from pyruvate: step 3/4. Functionally, functions in the biosynthesis of branched-chain amino acids. Catalyzes the dehydration of (2R,3R)-2,3-dihydroxy-3-methylpentanoate (2,3-dihydroxy-3-methylvalerate) into 2-oxo-3-methylpentanoate (2-oxo-3-methylvalerate) and of (2R)-2,3-dihydroxy-3-methylbutanoate (2,3-dihydroxyisovalerate) into 2-oxo-3-methylbutanoate (2-oxoisovalerate), the penultimate precursor to L-isoleucine and L-valine, respectively. The sequence is that of Dihydroxy-acid dehydratase from Stenotrophomonas maltophilia (strain K279a).